A 1416-amino-acid chain; its full sequence is DNA-directed RNA polymerase subunit beta (1416 aa).

Belongs to the RNA polymerase beta chain family. In terms of assembly, in plastids the minimal PEP RNA polymerase catalytic core is composed of four subunits: alpha, beta, beta', and beta''. When a (nuclear-encoded) sigma factor is associated with the core the holoenzyme is formed, which can initiate transcription.

The protein localises to the plastid. Its subcellular location is the chloroplast. It catalyses the reaction RNA(n) + a ribonucleoside 5'-triphosphate = RNA(n+1) + diphosphate. Its function is as follows. DNA-dependent RNA polymerase catalyzes the transcription of DNA into RNA using the four ribonucleoside triphosphates as substrates. The protein is DNA-directed RNA polymerase subunit beta of Oltmannsiellopsis viridis (Marine flagellate).